The sequence spans 662 residues: Protein translocase subunit SecA 2 (662 aa).

Residues Gln110, 128-132 (GEGKT), and Asp538 contribute to the ATP site.

Belongs to the SecA family. In terms of assembly, monomer and homodimer. Part of the essential Sec protein translocation apparatus which comprises SecA, SecYEG and auxiliary proteins SecDF. Other proteins may also be involved.

The protein localises to the cell inner membrane. It is found in the cytoplasm. It carries out the reaction ATP + H2O + cellular proteinSide 1 = ADP + phosphate + cellular proteinSide 2.. In terms of biological role, part of the Sec protein translocase complex. Interacts with the SecYEG preprotein conducting channel. Has a central role in coupling the hydrolysis of ATP to the transfer of proteins into and across the cell membrane, serving as an ATP-driven molecular motor driving the stepwise translocation of polypeptide chains across the membrane. The chain is Protein translocase subunit SecA 2 from Chlorobium chlorochromatii (strain CaD3).